An 82-amino-acid polypeptide reads, in one-letter code: Small ribosomal subunit protein bS18 (82 aa).

A disordered region spans residues 1–25; that stretch reads MADTSSSQARRPFHRRRKTCPFSGA.

Belongs to the bacterial ribosomal protein bS18 family. As to quaternary structure, part of the 30S ribosomal subunit. Forms a tight heterodimer with protein bS6.

Binds as a heterodimer with protein bS6 to the central domain of the 16S rRNA, where it helps stabilize the platform of the 30S subunit. The chain is Small ribosomal subunit protein bS18 from Agrobacterium fabrum (strain C58 / ATCC 33970) (Agrobacterium tumefaciens (strain C58)).